The primary structure comprises 313 residues: Homoserine O-succinyltransferase (313 aa).

Catalysis depends on C142, which acts as the Acyl-thioester intermediate. Substrate-binding residues include K163 and S192. Catalysis depends on H235, which acts as the Proton acceptor. E237 is a catalytic residue. R249 contributes to the substrate binding site.

This sequence belongs to the MetA family.

Its subcellular location is the cytoplasm. The catalysed reaction is L-homoserine + succinyl-CoA = O-succinyl-L-homoserine + CoA. The protein operates within amino-acid biosynthesis; L-methionine biosynthesis via de novo pathway; O-succinyl-L-homoserine from L-homoserine: step 1/1. Functionally, transfers a succinyl group from succinyl-CoA to L-homoserine, forming succinyl-L-homoserine. In Shewanella sp. (strain MR-4), this protein is Homoserine O-succinyltransferase.